The following is a 327-amino-acid chain: Lipoyl synthase (327 aa).

Residues cysteine 66, cysteine 71, cysteine 77, cysteine 92, cysteine 96, cysteine 99, and serine 306 each contribute to the [4Fe-4S] cluster site. The Radical SAM core domain occupies phenylalanine 78–serine 295.

This sequence belongs to the radical SAM superfamily. Lipoyl synthase family. [4Fe-4S] cluster serves as cofactor.

The protein localises to the cytoplasm. The enzyme catalyses [[Fe-S] cluster scaffold protein carrying a second [4Fe-4S](2+) cluster] + N(6)-octanoyl-L-lysyl-[protein] + 2 oxidized [2Fe-2S]-[ferredoxin] + 2 S-adenosyl-L-methionine + 4 H(+) = [[Fe-S] cluster scaffold protein] + N(6)-[(R)-dihydrolipoyl]-L-lysyl-[protein] + 4 Fe(3+) + 2 hydrogen sulfide + 2 5'-deoxyadenosine + 2 L-methionine + 2 reduced [2Fe-2S]-[ferredoxin]. It functions in the pathway protein modification; protein lipoylation via endogenous pathway; protein N(6)-(lipoyl)lysine from octanoyl-[acyl-carrier-protein]: step 2/2. Catalyzes the radical-mediated insertion of two sulfur atoms into the C-6 and C-8 positions of the octanoyl moiety bound to the lipoyl domains of lipoate-dependent enzymes, thereby converting the octanoylated domains into lipoylated derivatives. The polypeptide is Lipoyl synthase (Neisseria meningitidis serogroup B (strain ATCC BAA-335 / MC58)).